The chain runs to 372 residues: Glutamate 5-kinase (372 aa).

Lys14 serves as a coordination point for ATP. Substrate contacts are provided by Ser54, Asp141, and Asn153. ATP is bound by residues Thr173–Asp174 and Ser215–Lys221. The 79-residue stretch at Ala280–Ile358 folds into the PUA domain.

Belongs to the glutamate 5-kinase family.

It localises to the cytoplasm. The catalysed reaction is L-glutamate + ATP = L-glutamyl 5-phosphate + ADP. It participates in amino-acid biosynthesis; L-proline biosynthesis; L-glutamate 5-semialdehyde from L-glutamate: step 1/2. Catalyzes the transfer of a phosphate group to glutamate to form L-glutamate 5-phosphate. This Methylobacillus flagellatus (strain ATCC 51484 / DSM 6875 / VKM B-1610 / KT) protein is Glutamate 5-kinase.